A 148-amino-acid polypeptide reads, in one-letter code: Large ribosomal subunit protein bL9 (148 aa).

The protein belongs to the bacterial ribosomal protein bL9 family.

Binds to the 23S rRNA. The protein is Large ribosomal subunit protein bL9 of Bacillus thuringiensis subsp. konkukian (strain 97-27).